A 338-amino-acid polypeptide reads, in one-letter code: H(2)-forming methylenetetrahydromethanopterin dehydrogenase-related protein MJ0715 (338 aa).

The protein belongs to the HMD family.

The protein is H(2)-forming methylenetetrahydromethanopterin dehydrogenase-related protein MJ0715 of Methanocaldococcus jannaschii (strain ATCC 43067 / DSM 2661 / JAL-1 / JCM 10045 / NBRC 100440) (Methanococcus jannaschii).